A 134-amino-acid chain; its full sequence is Profilin-5 (134 aa).

The cysteines at positions 13 and 118 are disulfide-linked. The Involved in PIP2 interaction motif lies at 84-100; that stretch reads AVIRGKKGSGGITIKKT. Residue T114 is modified to Phosphothreonine.

Belongs to the profilin family. Occurs in many kinds of cells as a complex with monomeric actin in a 1:1 ratio. Phosphorylated by MAP kinases.

The protein resides in the cytoplasm. It is found in the cytoskeleton. Its function is as follows. Binds to actin and affects the structure of the cytoskeleton. At high concentrations, profilin prevents the polymerization of actin, whereas it enhances it at low concentrations. In Olea europaea (Common olive), this protein is Profilin-5.